Here is a 214-residue protein sequence, read N- to C-terminus: Ras-related protein Rab-11A (214 aa).

Residues 20–28 (GDSGVGKSN), 39–45 (SLETKST), 68–72 (DTAGQ), 126–129 (NKSD), and 156–158 (SAL) each bind GTP. Positions 42-50 (TKSTIGVEF) match the Effector region motif. Residues Cys213 and Cys214 are each lipidated (S-geranylgeranyl cysteine).

The protein belongs to the small GTPase superfamily. Rab family.

It localises to the contractile vacuole membrane. Required for normal contractile vacuole structure and function. Cells expressing a dominant negative rab11A exhibit a more extensive contractile vacuole network and enlarged contractile vacuole bladders. These cells exhibit a functional defect in osmotic regulation where cells immersed in water become rounded and detach from the surface, and contain swollen contractile vacuoles. The protein is Ras-related protein Rab-11A (rab11A) of Dictyostelium discoideum (Social amoeba).